Here is a 196-residue protein sequence, read N- to C-terminus: MLERIKGCFTESIQTQIAAAEALPDAISCAAMALVQSLLNGNKILCCGNGTSAANAQHFAASMINRFETERPSLPAIALNADNVVLTAITNDRLHDEVYAKQVRALGQAGDVLLAISTRGNSRDIVKAVEAAVTRDMTIVALTGYDGGELAGLLGQLDVEIRIPSHRGARVQELHMLTVNCLCDLIDNTLFPHQDD.

Residues 34 to 196 (LVQSLLNGNK…DNTLFPHQDD (163 aa)) enclose the SIS domain.

Belongs to the SIS family. DiaA subfamily. As to quaternary structure, homotetramer; dimer of dimers.

Functionally, required for the timely initiation of chromosomal replication via direct interactions with the DnaA initiator protein. In Yersinia pseudotuberculosis serotype O:1b (strain IP 31758), this protein is DnaA initiator-associating protein DiaA.